Consider the following 227-residue polypeptide: Cytidylate kinase (227 aa).

12–20 (GPSGAGKGT) contacts ATP.

Belongs to the cytidylate kinase family. Type 1 subfamily.

The protein localises to the cytoplasm. It catalyses the reaction CMP + ATP = CDP + ADP. The enzyme catalyses dCMP + ATP = dCDP + ADP. This is Cytidylate kinase from Erwinia tasmaniensis (strain DSM 17950 / CFBP 7177 / CIP 109463 / NCPPB 4357 / Et1/99).